Here is a 202-residue protein sequence, read N- to C-terminus: Na(+)-translocating NADH-quinone reductase subunit E (202 aa).

6 consecutive transmembrane segments (helical) span residues 4–24 (LAGL…FFLG), 35–55 (IEVA…TVPI), 81–101 (FLGL…LEMF), 114–134 (GIYL…LFMV), 144–164 (LVYG…LAGV), and 180–200 (LGIT…FSGI).

The protein belongs to the NqrDE/RnfAE family. Composed of six subunits; NqrA, NqrB, NqrC, NqrD, NqrE and NqrF.

The protein resides in the cell inner membrane. It catalyses the reaction a ubiquinone + n Na(+)(in) + NADH + H(+) = a ubiquinol + n Na(+)(out) + NAD(+). Functionally, NQR complex catalyzes the reduction of ubiquinone-1 to ubiquinol by two successive reactions, coupled with the transport of Na(+) ions from the cytoplasm to the periplasm. NqrA to NqrE are probably involved in the second step, the conversion of ubisemiquinone to ubiquinol. In Nitrosomonas europaea (strain ATCC 19718 / CIP 103999 / KCTC 2705 / NBRC 14298), this protein is Na(+)-translocating NADH-quinone reductase subunit E.